We begin with the raw amino-acid sequence, 988 residues long: Transcriptional regulator of yeast form adherence 5 (988 aa).

2 consecutive C2H2-type zinc fingers follow at residues 7-29 (YICA…ERSH) and 35-59 (FHCL…TVHH). The segment covering 59–83 (HTNLNPSTLPSNKSLKNPTTNPLDL) has biased composition (polar residues). 2 disordered regions span residues 59–129 (HTNL…SSVG) and 174–229 (SMES…SNNN). Low complexity predominate over residues 84–106 (SNNEGTTTTTKTGNRKNNSNKNG). 2 stretches are compositionally biased toward polar residues: residues 113–129 (TNPN…SSVG) and 174–208 (SMES…EIVL).

The protein localises to the nucleus. Functionally, transcription factor required for yeast cell adherence to silicone substrate. This Candida albicans (strain SC5314 / ATCC MYA-2876) (Yeast) protein is Transcriptional regulator of yeast form adherence 5 (TRY5).